We begin with the raw amino-acid sequence, 364 residues long: UDP-N-acetylglucosamine--N-acetylmuramyl-(pentapeptide) pyrophosphoryl-undecaprenol N-acetylglucosamine transferase (364 aa).

UDP-N-acetyl-alpha-D-glucosamine is bound by residues 10-12 (TGG), asparagine 124, arginine 165, serine 193, isoleucine 248, and glutamine 293.

The protein belongs to the glycosyltransferase 28 family. MurG subfamily.

It is found in the cell inner membrane. The enzyme catalyses di-trans,octa-cis-undecaprenyl diphospho-N-acetyl-alpha-D-muramoyl-L-alanyl-D-glutamyl-meso-2,6-diaminopimeloyl-D-alanyl-D-alanine + UDP-N-acetyl-alpha-D-glucosamine = di-trans,octa-cis-undecaprenyl diphospho-[N-acetyl-alpha-D-glucosaminyl-(1-&gt;4)]-N-acetyl-alpha-D-muramoyl-L-alanyl-D-glutamyl-meso-2,6-diaminopimeloyl-D-alanyl-D-alanine + UDP + H(+). The protein operates within cell wall biogenesis; peptidoglycan biosynthesis. In terms of biological role, cell wall formation. Catalyzes the transfer of a GlcNAc subunit on undecaprenyl-pyrophosphoryl-MurNAc-pentapeptide (lipid intermediate I) to form undecaprenyl-pyrophosphoryl-MurNAc-(pentapeptide)GlcNAc (lipid intermediate II). This chain is UDP-N-acetylglucosamine--N-acetylmuramyl-(pentapeptide) pyrophosphoryl-undecaprenol N-acetylglucosamine transferase, found in Geobacter sulfurreducens (strain ATCC 51573 / DSM 12127 / PCA).